Here is a 492-residue protein sequence, read N- to C-terminus: WD repeat-containing protein JIP5 (492 aa).

WD repeat units lie at residues 127-166 (RHKGSVRAMCFDSKGDNIFSVGSDNVLKKANTMTGKVVKK), 178-217 (KKNDKFTKLCASQTHPFILIGDESGNIHVINSENLALSNS), 236-274 (RSAYKFISLGQTTLAYFDVRDKDAKPNVAGNEDGKILIS), 276-317 (DQED…LEDQ), and 365-405 (RNHS…VEEN). Acidic residues-rich tracts occupy residues 404–414 (ENASVESDSDE) and 422–433 (DLSDDTSSDDET). The tract at residues 404-472 (ENASVESDSD…SKSVKKRKIM (69 aa)) is disordered. Basic and acidic residues predominate over residues 449-462 (KDLKEDHQEEKESN).

In terms of assembly, interacts with BUD27 and GIS1.

It localises to the nucleus. Its subcellular location is the nucleolus. This Saccharomyces cerevisiae (strain ATCC 204508 / S288c) (Baker's yeast) protein is WD repeat-containing protein JIP5 (JIP5).